A 993-amino-acid polypeptide reads, in one-letter code: Lateral signaling target protein 2 homolog (993 aa).

Disordered stretches follow at residues 340–449 (DQRN…DTTD), 494–623 (DGYG…TVVQ), 759–813 (GARH…GDQE), and 825–902 (AVNE…PPAW). The segment covering 343-360 (NNNNNINNNSSSSSNSNS) has biased composition (low complexity). A compositionally biased stretch (polar residues) spans 372-405 (RSPSMLSLSTASPTPSHSIGSTFSAATSSTNPPV). Residues 409–448 (DGDDADDDDDGDDDDEDDDDDVDDDLVGNDDSDDDDDDTT) show a composition bias toward acidic residues. Residues Ser-525 and Ser-526 each carry the phosphoserine modification. A compositionally biased stretch (polar residues) spans 535 to 549 (SHNNTTTIKSPDSDG). The segment covering 559–608 (SRQRHSHHHHRHHHHHHRHSSHSSHSHHHQHQQHHSQPHPHRTTRSGRKR) has biased composition (basic residues). Residues 759 to 801 (GARHSAGASMQRNHTTIDNNNSTSSSPPDATITTTTTTTTTRS) are compositionally biased toward low complexity. Ser-808 carries the phosphoserine modification. Low complexity-rich tracts occupy residues 842–862 (SNTP…QNSP) and 884–896 (TTAT…GTGT). The FYVE-type zinc-finger motif lies at 905-965 (DGKAPRCMSC…VCRDCYAREI (61 aa)). The Zn(2+) site is built by Cys-911, Cys-914, Cys-927, Cys-930, Cys-935, Cys-938, Cys-957, and Cys-960. A disordered region spans residues 968-993 (SGGGGGGVVQMQRQQAANRPQTASAS). A compositionally biased stretch (polar residues) spans 978 to 993 (MQRQQAANRPQTASAS).

It belongs to the lst-2 family.

Its function is as follows. Negative regulator of epidermal growth factor receptor (EGFR) signaling. This chain is Lateral signaling target protein 2 homolog, found in Drosophila willistoni (Fruit fly).